The sequence spans 717 residues: Cleavage stimulation factor subunit 3 (717 aa).

N-acetylserine is present on Ser2. 9 HAT repeats span residues 45–77 (QPID…AEIK), 79–110 (KNYD…YVRE), 117–152 (SYKE…FLKG), 163–196 (QRIT…YEEG), 221–261 (KEYE…WEKS), 271–303 (LITK…YLEQ), 319–352 (LFSD…YEES), 354–387 (MKYE…FARR), and 458–494 (NEDN…FESN). Residues 684 to 705 (VKRPNEDSDEDEEKGAVVPPVH) are disordered. Residue Ser691 is modified to Phosphoserine.

As to quaternary structure, homodimer. The CSTF complex is composed of CSTF1 (50 kDa subunit), CSTF2 (64 kDa subunit) and CSTF3 (77 kDa subunit). CSTF3 directly interacts with CSTF1 and CSTF2. Interacts with FIP1L1.

The protein resides in the nucleus. In terms of biological role, one of the multiple factors required for polyadenylation and 3'-end cleavage of mammalian pre-mRNAs. In Pongo abelii (Sumatran orangutan), this protein is Cleavage stimulation factor subunit 3 (CSTF3).